Reading from the N-terminus, the 667-residue chain is DNA ligase (667 aa).

Residues 32–36 (DSVYD), 81–82 (SL), and Glu-111 contribute to the NAD(+) site. Lys-113 serves as the catalytic N6-AMP-lysine intermediate. NAD(+) is bound by residues Arg-134, Glu-168, Lys-285, and Lys-309. Positions 403, 406, 421, and 426 each coordinate Zn(2+). A BRCT domain is found at 588 to 667 (VGDNPFAGKT…DNLIEQLNLI (80 aa)).

It belongs to the NAD-dependent DNA ligase family. LigA subfamily. Requires Mg(2+) as cofactor. Mn(2+) is required as a cofactor.

It catalyses the reaction NAD(+) + (deoxyribonucleotide)n-3'-hydroxyl + 5'-phospho-(deoxyribonucleotide)m = (deoxyribonucleotide)n+m + AMP + beta-nicotinamide D-nucleotide.. In terms of biological role, DNA ligase that catalyzes the formation of phosphodiester linkages between 5'-phosphoryl and 3'-hydroxyl groups in double-stranded DNA using NAD as a coenzyme and as the energy source for the reaction. It is essential for DNA replication and repair of damaged DNA. In Lysinibacillus sphaericus (strain C3-41), this protein is DNA ligase.